The following is a 107-amino-acid chain: Sulfurtransferase Alvin_2599 (107 aa).

The 89-residue stretch at 16 to 104 folds into the Rhodanese domain; the sequence is DTEDVLLVDI…WARHGLPIVA (89 aa). Residue Cys64 is the Cysteine persulfide intermediate of the active site.

As to quaternary structure, monomer.

The protein resides in the cytoplasm. The protein operates within energy metabolism; sulfur metabolism. Its function is as follows. Sulfur carrier protein involved in sulfur trafficking for oxidative dissimilatory sulfur metabolism. Component of a sulfur relay system that starts with the sulfur-mobilizing rhodanese-like protein Rhd_2599 (Alvin_2599), which transfers the sulfur from a low-molecular-weight thiol, maybe glutathione, to the TusA protein (Alvin_2600); TusA serves as the sulfur donor for DsrEFH, which persulfurates DsrC; persulfurated DsrC very probably serves as a direct substrate for reverse-acting sulfite reductase, DsrAB. Is able to catalyze the sulfur transfer reaction from thiosulfate or glutathione (GSSH) to cyanide in vitro, however, thiosulfate is unlikely an in vivo substrate. This Allochromatium vinosum (strain ATCC 17899 / DSM 180 / NBRC 103801 / NCIMB 10441 / D) (Chromatium vinosum) protein is Sulfurtransferase Alvin_2599.